A 402-amino-acid chain; its full sequence is Uroporphyrinogen decarboxylase 1, chloroplastic (402 aa).

A chloroplast-targeting transit peptide spans Met1–Arg50. Residues Arg67–Arg71, Phe86, Ser116, Asp117, Tyr193, Ser248, and His363 contribute to the substrate site.

The protein belongs to the uroporphyrinogen decarboxylase family. In terms of assembly, homodimer.

The protein resides in the plastid. It localises to the chloroplast. The enzyme catalyses uroporphyrinogen III + 4 H(+) = coproporphyrinogen III + 4 CO2. It functions in the pathway porphyrin-containing compound metabolism; protoporphyrin-IX biosynthesis; coproporphyrinogen-III from 5-aminolevulinate: step 4/4. Catalyzes the decarboxylation of four acetate groups of uroporphyrinogen-III to yield coproporphyrinogen-III. This Oryza sativa subsp. japonica (Rice) protein is Uroporphyrinogen decarboxylase 1, chloroplastic.